The following is a 471-amino-acid chain: Heat shock 70 kDa protein 13 (471 aa).

The signal sequence occupies residues 1–22 (MAREMTILGSAVLTLLLAGYLA). Residues 315–341 (EQDRKEPHSSDTELPKDKLSSADDHRV) show a composition bias toward basic and acidic residues. The tract at residues 315 to 352 (EQDRKEPHSSDTELPKDKLSSADDHRVNSGFGRGLSDK) is disordered.

The protein belongs to the heat shock protein 70 family. As to quaternary structure, binds UBQLN2. Constitutively expressed in all tissues.

It localises to the microsome. The protein resides in the endoplasmic reticulum. Functionally, has peptide-independent ATPase activity. The protein is Heat shock 70 kDa protein 13 (HSPA13) of Homo sapiens (Human).